The sequence spans 957 residues: Glycine dehydrogenase (decarboxylating) (957 aa).

At K708 the chain carries N6-(pyridoxal phosphate)lysine.

The protein belongs to the GcvP family. The glycine cleavage system is composed of four proteins: P, T, L and H. Pyridoxal 5'-phosphate is required as a cofactor.

The enzyme catalyses N(6)-[(R)-lipoyl]-L-lysyl-[glycine-cleavage complex H protein] + glycine + H(+) = N(6)-[(R)-S(8)-aminomethyldihydrolipoyl]-L-lysyl-[glycine-cleavage complex H protein] + CO2. Functionally, the glycine cleavage system catalyzes the degradation of glycine. The P protein binds the alpha-amino group of glycine through its pyridoxal phosphate cofactor; CO(2) is released and the remaining methylamine moiety is then transferred to the lipoamide cofactor of the H protein. This is Glycine dehydrogenase (decarboxylating) from Shigella sonnei (strain Ss046).